We begin with the raw amino-acid sequence, 584 residues long: 2-succinyl-5-enolpyruvyl-6-hydroxy-3-cyclohexene-1-carboxylate synthase (584 aa).

This sequence belongs to the TPP enzyme family. MenD subfamily. Homodimer. The cofactor is Mg(2+). Mn(2+) is required as a cofactor. It depends on thiamine diphosphate as a cofactor.

It carries out the reaction isochorismate + 2-oxoglutarate + H(+) = 5-enolpyruvoyl-6-hydroxy-2-succinyl-cyclohex-3-ene-1-carboxylate + CO2. It participates in quinol/quinone metabolism; 1,4-dihydroxy-2-naphthoate biosynthesis; 1,4-dihydroxy-2-naphthoate from chorismate: step 2/7. The protein operates within quinol/quinone metabolism; menaquinone biosynthesis. Functionally, catalyzes the thiamine diphosphate-dependent decarboxylation of 2-oxoglutarate and the subsequent addition of the resulting succinic semialdehyde-thiamine pyrophosphate anion to isochorismate to yield 2-succinyl-5-enolpyruvyl-6-hydroxy-3-cyclohexene-1-carboxylate (SEPHCHC). The protein is 2-succinyl-5-enolpyruvyl-6-hydroxy-3-cyclohexene-1-carboxylate synthase of Bacillus thuringiensis subsp. konkukian (strain 97-27).